The chain runs to 843 residues: Lon protease (843 aa).

A compositionally biased stretch (basic and acidic residues) spans 1-16; the sequence is MRERKETAMSDKEKKG. Residues 1–22 form a disordered region; that stretch reads MRERKETAMSDKEKKGAGAGAQ. In terms of domain architecture, Lon N-terminal spans 42-236; it reads LPILPLRNSV…LVLELLNRKR (195 aa). Position 388-395 (388-395) interacts with ATP; sequence GPPGVGKT. One can recognise a Lon proteolytic domain in the interval 627–808; that stretch reads TEIAGVATGL…DEVLQAALEE (182 aa). Active-site residues include Ser-714 and Lys-757. The tract at residues 805–843 is disordered; the sequence is ALEENPVGRKPPAAPEPEGEKKPGATPTPPAKKPDEIRV.

This sequence belongs to the peptidase S16 family. As to quaternary structure, homohexamer. Organized in a ring with a central cavity.

The protein localises to the cytoplasm. The enzyme catalyses Hydrolysis of proteins in presence of ATP.. Functionally, ATP-dependent serine protease that mediates the selective degradation of mutant and abnormal proteins as well as certain short-lived regulatory proteins. Required for cellular homeostasis and for survival from DNA damage and developmental changes induced by stress. Degrades polypeptides processively to yield small peptide fragments that are 5 to 10 amino acids long. Binds to DNA in a double-stranded, site-specific manner. The polypeptide is Lon protease (Anaeromyxobacter dehalogenans (strain 2CP-C)).